We begin with the raw amino-acid sequence, 148 residues long: Putative pre-16S rRNA nuclease (148 aa).

This sequence belongs to the YqgF nuclease family.

The protein resides in the cytoplasm. Could be a nuclease involved in processing of the 5'-end of pre-16S rRNA. This is Putative pre-16S rRNA nuclease from Colwellia psychrerythraea (strain 34H / ATCC BAA-681) (Vibrio psychroerythus).